The chain runs to 151 residues: Small ribosomal subunit protein uS11 (151 aa).

Residues 129–151 (IEDVTPVPSDSTRRKGGRRGRRL) form a disordered region. Basic residues predominate over residues 142–151 (RKGGRRGRRL).

This sequence belongs to the universal ribosomal protein uS11 family.

The chain is Small ribosomal subunit protein uS11 (RPS14) from Procambarus clarkii (Red swamp crayfish).